A 1522-amino-acid chain; its full sequence is MSPARGDANASVARASGGSSNGAVTADEVVVQVDDSDENRENLRDRDRADKLEKLEKDAHARSQTQTQVQAPPVTVSSFRSANGDAIRAYRSETALTMKPRPRGSTSSTPTTTIPPLRPGRPSSPESPSLKRLSPRYSPTILASRTSRFSNRTGIRDSQSPSPILADEMVGRESLRKRPATSNTPAPKTPTPKNTEWTVDKIASALSVLAEEVPQNHSRLVNFLLEETEKRAPQPRHLSKTDPFAHMKSKAIDANRPRPEGVPTMDVKFKQHSGEYGKSRNSGRRFQYPVVCIKPDREPVPPYRFHHAEIRKNILALNSQLNFVPHLRDVDPNSAEEQKYSAWLMDLENLDSKSGFKIQPRSQKIAKRAQAEYAATLAPYLEPWLRKLNIEGCTKSNLIRFMASQPESDDSMTPQQKSNLLDTYSDDMGSPQAVRNASMFTEAWDRVFNDQSKLRRVALRDILMLDKNVEPIFDNKRAKDAPGSQKPPDEALMQKVIDALGSYTTLGCLICFSHDCEHGEIERDNQKRCFSLEEIGGLMPSLRRKWAAQIEQRQKTEGGSANAPPAHPPCRNECYRIHGTGDPNQQVPPWSENEVGTLEWMFATIGYSQTLRPECFVGAILGRPCWDVHRKLQELDLRLPPVEPRTIPKQKSLPWYDRRKKQLMSDWADATITHEHAVRELFAPCHHDGPCTAANGCPCASAGTHPVLCERFCLCTAEECPLKFTGCACHSSGKTCLQRQREGRPCICVQLNRECDPTLCKGCGARERADPENAYDEVLHSTGCQNVALQRGAAKAVVLGKSQLEACGYGLFAAEDIEEGEFVIEYTGELISHDEGVRREHRRGDVFDEENKVSYLFTLLEQEGIWVDAAIYGNLSRYINHATDGNIMPKIMYVNHEWRIKFTAIKDIKAGEELFFNYGDNFPNLTKKLVERNEQSGAETTPQQPKRANGAATQRATARKTTSKAKGEGIGFDDDDRDGNDSDPDDLWMGDQQQQQQQQQQQQQQQQQQQQQQQQQQQQQQQQQAQKPQPSTSHQPQSRAERSSTETGSEEISPDKQLRRENHDAQRQLLHQFQQQEQQQQQQQQQQQQQQTLPRKEPKKEELEEEIDLDAPRRSRLKRRLEALKGDSSSGGSANEQPPVKKPSRRGGARPGAGRKPKHRPPGAKGKDSKGKKGPSSSAGATTGAGSGESSGVNETGEEEVAVNGKSDSKDEAKEEETDKEKEEDEKVNEKDREKGRDSLSSPTEEPIAFLPVTKSAPSPAKKQASSPTKISDSNRTTSKNTSSNNNNNTNNNNNNNNNEFPSPVISPRKTRSSDHLTNSQPAALSPSATTRKRKASDLTSDTHLSAAGKGSDPSTMTTTTTTTTTTTSSSSSSSSSSSSSSSSSKAQPILEEKGDDDDENNEPITSPLKRQKTSSSLSSSHSMSVFSEAKEGVNGAVPGSGRNLRSSGVKVDSSGLNSTSLSQERGEKHEKHEKEKPKEKKGEKERERERDRSEEADEELLPMDRSMRKRQKPARYRDEGE.

The interval M1 to E196 is disordered. Residues N39–A61 are compositionally biased toward basic and acidic residues. 2 stretches are compositionally biased toward low complexity: residues Q64–V76 and R103–L130. A compositionally biased stretch (polar residues) spans I141–S162. Residues A180–T195 show a composition bias toward low complexity. The SBD domain stretch occupies residues P190–L220. The interval V221–K250 is EBD domain. The interval A251–V300 is BAM domain. The segment at P301–Q320 is SAL domain. The tract at residues L321–P360 is SRM domain. The tract at residues R361–D480 is SANT1L domain. The segment at P406–D426 is disordered. A compositionally biased stretch (polar residues) spans S411 to D422. The segment at A481–S560 is MCSS domain. The Zn(2+) site is built by C508, C511, C516, H518, C570, C574, C615, C625, C685, H687, C691, C697, C699, C709, C713, C715, C720, C727, C729, C736, C746, C748, C755, C760, C763, and C784. The SANT2L domain stretch occupies residues A561–Q650. A CXC domain is found at R658 to H780. One can recognise an SET domain in the interval K795–G919. S-adenosyl-L-homocysteine-binding residues include Y809, K852, S854, and Y855. Y809, K852, S854, Y855, N880, H881, and T926 together coordinate S-adenosyl-L-methionine. H881 lines the S-adenosyl-L-homocysteine pocket. An S-adenosyl-L-homocysteine-binding site is contributed by K927. The interval N933–E1522 is disordered. Positions Q935 to K946 are enriched in polar residues. Residues G971–W988 show a composition bias toward acidic residues. The span at Q992–Q1024 shows a compositional bias: low complexity. Over residues A1025 to S1038 the composition is skewed to polar residues. Residues S1053 to Q1066 show a composition bias toward basic and acidic residues. Residues Q1072 to Q1091 are compositionally biased toward low complexity. A compositionally biased stretch (polar residues) spans D1127–E1136. A compositionally biased stretch (basic residues) spans K1142–P1162. Composition is skewed to basic and acidic residues over residues S1207–E1221 and V1228–D1238. Low complexity predominate over residues K1255–N1299. A compositionally biased stretch (polar residues) spans H1316 to T1330. 2 stretches are compositionally biased toward low complexity: residues S1355–S1385 and S1415–S1428. Positions S1455–Q1464 are enriched in polar residues. The span at E1465–S1494 shows a compositional bias: basic and acidic residues.

This sequence belongs to the class V-like SAM-binding methyltransferase superfamily. Histone-lysine methyltransferase family. EZ subfamily. As to quaternary structure, component of the polycomb repressive complex 2 (PRC2) that consists of four core subunits icluding EZH2, EED, SUZ12, and RBBP4, among which EZH2 is the catalytic subunit and which minimally requires EED and SUZ12 for catalysis.

Its subcellular location is the nucleus. The enzyme catalyses L-lysyl(27)-[histone H3] + 3 S-adenosyl-L-methionine = N(6),N(6),N(6)-trimethyl-L-lysyl(27)-[histone H3] + 3 S-adenosyl-L-homocysteine + 3 H(+). The end product of PRC2 catalysis, H3K27me3, interacts with EED to stimulate the enzymatic activity of PRC2 allosterically. The enzymatic activity of PRC2 is regulated in a very complex manner and PCR2 can adopt different stages including the autoinhibited (A); SAM-bound autoinhibited (A'), basal (B), and H3K27me3-stimulated (S) stages. Actictivity is inhibited by pyridone inhibitors such as GSK126. In terms of biological role, catalytic subunit of the of the Polycomb Repressive Complex 2 (PRC2), a histone H3 lysine methyltransferase responsible for generating mono-, di-, and tri-methylation on Lys27 (H3K27me1, H3K27me2 and H3K27me3). The tri-methylated form is known to be critical in gene repression, and its proper placement is essential in defining repression patterns during development. The PRC2 complex interacts with thousands of RNA species in vivo, but the physiological function of RNA binding has still to be determined. In Chaetomium thermophilum (strain DSM 1495 / CBS 144.50 / IMI 039719) (Thermochaetoides thermophila), this protein is Histone-lysine N-methyltransferase EZH2.